Reading from the N-terminus, the 184-residue chain is dCTP deaminase (184 aa).

107-112 (KSTYAR) is a binding site for dCTP. E133 acts as the Proton donor/acceptor in catalysis. The dCTP site is built by Q152, Y166, and Q176.

This sequence belongs to the dCTP deaminase family. In terms of assembly, homotrimer.

It catalyses the reaction dCTP + H2O + H(+) = dUTP + NH4(+). It participates in pyrimidine metabolism; dUMP biosynthesis; dUMP from dCTP (dUTP route): step 1/2. Functionally, catalyzes the deamination of dCTP to dUTP. The sequence is that of dCTP deaminase from Acidiphilium cryptum (strain JF-5).